The sequence spans 270 residues: Replication protein A 32 kDa subunit (270 aa).

Met1 carries the N-acetylmethionine modification. Phosphoserine; by PRKDC occurs at positions 4 and 8. The interval 20-41 (YTQSPGGFGSPTPSQAEKKSRV) is disordered. Thr21 carries the phosphothreonine; by PRKDC modification. Residue Ser23 is modified to Phosphoserine; by CDK2. A Phosphoserine; by CDK1 modification is found at Ser29. The residue at position 33 (Ser33) is a Phosphoserine; by PRKDC. Glycyl lysine isopeptide (Lys-Gly) (interchain with G-Cter in ubiquitin) cross-links involve residues Lys37 and Lys38. Positions 74–148 (VTIVGIIRHA…KSLVAFKIIP (75 aa)) form a DNA-binding region, OB. Residues 171–192 (KPNSQASAGRPSMSNPGMSEPG) form a disordered region. The tract at residues 187 to 270 (GMSEPGNFSG…DDHFKSTDAE (84 aa)) is interaction with RAD52, TIPIN, UNG and XPA.

Belongs to the replication factor A protein 2 family. In terms of assembly, component of the replication protein A complex (RPA/RP-A), a heterotrimeric complex composed of RPA1, RPA2 and RPA3. Interacts with PRPF19; the PRP19-CDC5L complex is recruited to the sites of DNA repair where it ubiquitinates the replication protein A complex (RPA). Interacts with SERTAD3. Interacts with TIPIN. Interacts with TIMELESS. Interacts with PPP4R2; the interaction is direct, DNA damage-dependent and mediates the recruitment of the PP4 catalytic subunit PPP4C. Interacts (hyperphosphorylated) with RAD51. Interacts with SMARCAL1; the interaction is direct and mediates the recruitment to the RPA complex of SMARCAL1. Interacts with RAD52 and XPA; those interactions are direct and associate RAD52 and XPA to the RPA complex. Interacts with FBH1. Interacts with ETAA1; the interaction is direct and promotes ETAA1 recruitment at stalled replication forks. Interacts with DDI2. Interacts (in unphosphorylated form via N-terminus) with EIF4EBP3; the interaction enhances EIF4EBP3-mediated inhibition of EIF4E-mediated mRNA nuclear export. Interacts with nuclear UNG (isoform 2); this interaction mediates UNG recruitment to RPA-coated single-stranded DNA at stalled replication forks. In terms of processing, differentially phosphorylated throughout the cell cycle, becoming phosphorylated at the G1-S transition and dephosphorylated in late mitosis. Mainly phosphorylated at Ser-23 and Ser-29, by cyclin A-CDK2 and cyclin B-CDK1, respectively during DNA replication and mitosis. Dephosphorylation may require the serine/threonine-protein phosphatase 4. Phosphorylation at Ser-23 and Ser-29 is a prerequisite for further phosphorylation. Becomes hyperphosphorylated on additional residues including Ser-4, Ser-8, Thr-21 and Ser-33 in response to DNA damage. Hyperphosphorylation is mediated by ATM, ATR and PRKDC. Primarily recruited to DNA repair nuclear foci as a hypophosphorylated form it undergoes subsequent hyperphosphorylation, catalyzed by ATR. Hyperphosphorylation is required for RAD51 recruitment to chromatin and efficient DNA repair. Phosphorylation at Thr-21 depends upon RFWD3 presence. DNA damage-induced 'Lys-63'-linked polyubiquitination by PRPF19 mediates ATRIP recruitment to the RPA complex at sites of DNA damage and activation of ATR. Ubiquitinated by RFWD3 at stalled replication forks in response to DNA damage: ubiquitination by RFWD3 does not lead to degradation by the proteasome and promotes removal of the RPA complex from stalled replication forks, promoting homologous recombination.

It is found in the nucleus. It localises to the PML body. Its function is as follows. As part of the heterotrimeric replication protein A complex (RPA/RP-A), binds and stabilizes single-stranded DNA intermediates, that form during DNA replication or upon DNA stress. It prevents their reannealing and in parallel, recruits and activates different proteins and complexes involved in DNA metabolism. Thereby, it plays an essential role both in DNA replication and the cellular response to DNA damage. In the cellular response to DNA damage, the RPA complex controls DNA repair and DNA damage checkpoint activation. Through recruitment of ATRIP activates the ATR kinase a master regulator of the DNA damage response. It is required for the recruitment of the DNA double-strand break repair factors RAD51 and RAD52 to chromatin in response to DNA damage. Also recruits to sites of DNA damage proteins like XPA and XPG that are involved in nucleotide excision repair and is required for this mechanism of DNA repair. Also plays a role in base excision repair (BER) probably through interaction with UNG. Also recruits SMARCAL1/HARP, which is involved in replication fork restart, to sites of DNA damage. May also play a role in telomere maintenance. This chain is Replication protein A 32 kDa subunit, found in Mus musculus (Mouse).